A 181-amino-acid chain; its full sequence is 30 kDa heat shock protein (181 aa).

Positions 33–181 constitute a sHSP domain; sequence ASVQSFAPRF…PPTAKKITIQ (149 aa). Residues 79–115 show a composition bias toward basic and acidic residues; sequence GRSEREYHSSSDDNKNDQADTENQARGESSEVAKTGE. A disordered region spans residues 79–127; the sequence is GRSEREYHSSSDDNKNDQADTENQARGESSEVAKTGEKQVSTKKAANKS.

Belongs to the small heat shock protein (HSP20) family.

The sequence is that of 30 kDa heat shock protein (hsp30) from Emericella nidulans (strain FGSC A4 / ATCC 38163 / CBS 112.46 / NRRL 194 / M139) (Aspergillus nidulans).